Consider the following 156-residue polypeptide: MSRRHRAEKREINPDPKFGDLVITKFMNAIMFDGKKSVAERIVYGALDVVESKVKSDPVVLFHQALENVAPHIEVRSRRVGGATYQVPVDVRPDRRRALAVRWLITAARGRNETTMINRLAGELMDAANNRGSAVKKREDVHRMAEANRAFSHYRW.

Belongs to the universal ribosomal protein uS7 family. In terms of assembly, part of the 30S ribosomal subunit. Contacts proteins S9 and S11.

One of the primary rRNA binding proteins, it binds directly to 16S rRNA where it nucleates assembly of the head domain of the 30S subunit. Is located at the subunit interface close to the decoding center, probably blocks exit of the E-site tRNA. The protein is Small ribosomal subunit protein uS7 of Bartonella quintana (strain Toulouse) (Rochalimaea quintana).